Reading from the N-terminus, the 424-residue chain is Protein FAM43A (424 aa).

A compositionally biased stretch (acidic residues) spans 261-297 (QQEEELQEEEEEHLEDCLEEEEEEDGVGDGDPAEEEA). Disordered regions lie at residues 261 to 299 (QQEE…EAEA) and 382 to 424 (LLSG…PYSG). Over residues 382–394 (LLSGESTGSESSI) the composition is skewed to low complexity. Positions 405 to 418 (SPGNPSGPADSTSL) are enriched in polar residues.

Belongs to the FAM43 family.

This is Protein FAM43A (Fam43a) from Mus musculus (Mouse).